The sequence spans 145 residues: Functional amyloid chaperone FapA (145 aa).

The signal sequence occupies residues 1-27 (MRKRDKRLYHLLLVGCVLGSLSLTAQA).

This sequence belongs to the FapA family. In terms of assembly, monomer in solution. Interacts with FapC but not FapB in vitro.

It localises to the periplasm. Functionally, an intrinsically disordered chaperone for fibril amyloid FapC that guards against fibrillation, pro within the periplasm. Upon overexpression of the endogenous six-gene locus (fapA-fapF), cells form large clumps during liquid growth, make large amounts of biofilm and produce relatively unstable amyloid fibrils. This Pseudomonas putida (strain ATCC 700007 / DSM 6899 / JCM 31910 / BCRC 17059 / LMG 24140 / F1) protein is Functional amyloid chaperone FapA.